Reading from the N-terminus, the 401-residue chain is Ribosomal RNA large subunit methyltransferase G (401 aa).

The protein belongs to the methyltransferase superfamily. RlmG family.

Its subcellular location is the cytoplasm. The catalysed reaction is guanosine(1835) in 23S rRNA + S-adenosyl-L-methionine = N(2)-methylguanosine(1835) in 23S rRNA + S-adenosyl-L-homocysteine + H(+). Specifically methylates the guanine in position 1835 (m2G1835) of 23S rRNA. This chain is Ribosomal RNA large subunit methyltransferase G, found in Shewanella loihica (strain ATCC BAA-1088 / PV-4).